We begin with the raw amino-acid sequence, 488 residues long: E3 ubiquitin-protein ligase RNF8 (488 aa).

Positions 38-92 constitute an FHA domain; sequence VTIGRGLSVTYQLISKVCPLMISRSHCVLKQNPEGQWTIMDNKSLNGVWLNRERL. The segment at 68–72 is required for interaction with PIWIL1; the sequence is QNPEG. The tract at residues 141-164 is disordered; it reads DQRMEKHKGSRTKRKFSSPGLENL. A compositionally biased stretch (basic residues) spans 145–156; that stretch reads EKHKGSRTKRKF. S157 is modified (phosphoserine). The RING-type zinc finger occupies 406–444; it reads CIICSEYFIEAVTLNCAHSFCSFCINEWMKRKVECPICR.

It belongs to the RNF8 family. Homodimer. Forms a E2-E3 ubiquitin ligase complex composed of the RNF8 homodimer and a E2 heterodimer of UBE2N and UBE2V2. Interacts with class III E2s, including UBE2E1, UBE2E2, and UBE2E3 and with UBE2N. Interacts with RXRA. Interacts (via FHA domain) with ATM-phosphorylated MDC1. Interacts (via FHA domain) with 'Thr-4829' phosphorylated HERC2 (via C-terminus). Interacts with PIWIL1; leading to sequester RNF8 in the cytoplasm. Interacts with WRAP53/TCAB1. In terms of assembly, (Microbial infection) May interact with the L.monocytogenes protein actA; however, given these errors in the sequence (AJ242721), the relevance of the interaction with actA remains to be confirmed. Post-translationally, autoubiquitinated through 'Lys-48' and 'Lys-63' of ubiquitin. 'Lys-63' polyubiquitination is mediated by UBE2N. 'Lys-29'-type polyubiquitination is also observed, but it doesn't require its own functional RING-type zinc finger.

It localises to the nucleus. It is found in the cytoplasm. The protein localises to the midbody. The protein resides in the chromosome. Its subcellular location is the telomere. It carries out the reaction S-ubiquitinyl-[E2 ubiquitin-conjugating enzyme]-L-cysteine + [acceptor protein]-L-lysine = [E2 ubiquitin-conjugating enzyme]-L-cysteine + N(6)-ubiquitinyl-[acceptor protein]-L-lysine.. Its pathway is protein modification; protein ubiquitination. Its function is as follows. E3 ubiquitin-protein ligase that plays a key role in DNA damage signaling via 2 distinct roles: by mediating the 'Lys-63'-linked ubiquitination of histones H2A and H2AX and promoting the recruitment of DNA repair proteins at double-strand breaks (DSBs) sites, and by catalyzing 'Lys-48'-linked ubiquitination to remove target proteins from DNA damage sites. Following DNA DSBs, it is recruited to the sites of damage by ATM-phosphorylated MDC1 and catalyzes the 'Lys-63'-linked ubiquitination of histones H2A and H2AX, thereby promoting the formation of TP53BP1 and BRCA1 ionizing radiation-induced foci (IRIF). Also controls the recruitment of UIMC1-BRCC3 (RAP80-BRCC36) and PAXIP1/PTIP to DNA damage sites. Promotes the recruitment of NBN to DNA damage sites by catalyzing 'Lys-6'-linked ubiquitination of NBN. Also recruited at DNA interstrand cross-links (ICLs) sites and catalyzes 'Lys-63'-linked ubiquitination of histones H2A and H2AX, leading to recruitment of FAAP20 and Fanconi anemia (FA) complex, followed by interstrand cross-link repair. H2A ubiquitination also mediates the ATM-dependent transcriptional silencing at regions flanking DSBs in cis, a mechanism to avoid collision between transcription and repair intermediates. Promotes the formation of 'Lys-63'-linked polyubiquitin chains via interactions with the specific ubiquitin-conjugating UBE2N/UBC13 and ubiquitinates non-histone substrates such as PCNA. Substrates that are polyubiquitinated at 'Lys-63' are usually not targeted for degradation. Also catalyzes the formation of 'Lys-48'-linked polyubiquitin chains via interaction with the ubiquitin-conjugating UBE2L6/UBCH8, leading to degradation of substrate proteins such as CHEK2, JMJD2A/KDM4A and KU80/XRCC5: it is still unclear how the preference toward 'Lys-48'- versus 'Lys-63'-linked ubiquitination is regulated but it could be due to RNF8 ability to interact with specific E2 specific ligases. For instance, interaction with phosphorylated HERC2 promotes the association between RNF8 and UBE2N/UBC13 and favors the specific formation of 'Lys-63'-linked ubiquitin chains. Promotes non-homologous end joining (NHEJ) by promoting the 'Lys-48'-linked ubiquitination and degradation the of KU80/XRCC5. Following DNA damage, mediates the ubiquitination and degradation of JMJD2A/KDM4A in collaboration with RNF168, leading to unmask H4K20me2 mark and promote the recruitment of TP53BP1 at DNA damage sites. Following DNA damage, mediates the ubiquitination and degradation of POLD4/p12, a subunit of DNA polymerase delta. In the absence of POLD4, DNA polymerase delta complex exhibits higher proofreading activity. In addition to its function in damage signaling, also plays a role in higher-order chromatin structure by mediating extensive chromatin decondensation. Involved in the activation of ATM by promoting histone H2B ubiquitination, which indirectly triggers histone H4 'Lys-16' acetylation (H4K16ac), establishing a chromatin environment that promotes efficient activation of ATM kinase. Required in the testis, where it plays a role in the replacement of histones during spermatogenesis. At uncapped telomeres, promotes the joining of deprotected chromosome ends by inducing H2A ubiquitination and TP53BP1 recruitment, suggesting that it may enhance cancer development by aggravating telomere-induced genome instability in case of telomeric crisis. Promotes the assembly of RAD51 at DNA DSBs in the absence of BRCA1 and TP53BP1 Also involved in class switch recombination in immune system, via its role in regulation of DSBs repair. May be required for proper exit from mitosis after spindle checkpoint activation and may regulate cytokinesis. May play a role in the regulation of RXRA-mediated transcriptional activity. Not involved in RXRA ubiquitination by UBE2E2. The sequence is that of E3 ubiquitin-protein ligase RNF8 from Mus musculus (Mouse).